A 53-amino-acid polypeptide reads, in one-letter code: UPF0391 membrane protein PputGB1_0151 (53 aa).

2 helical membrane-spanning segments follow: residues 4–24 and 29–49; these read WAIT…GGIA and GIAK…FFFG.

This sequence belongs to the UPF0391 family.

It is found in the cell membrane. In Pseudomonas putida (strain GB-1), this protein is UPF0391 membrane protein PputGB1_0151.